Consider the following 1414-residue polypeptide: DNA-directed RNA polymerase subunit beta' (1414 aa).

Residues Cys70, Cys72, Cys85, and Cys88 each coordinate Zn(2+). Mg(2+) is bound by residues Asp461, Asp463, and Asp465. Residues Cys820, Cys894, Cys901, and Cys904 each contribute to the Zn(2+) site.

Belongs to the RNA polymerase beta' chain family. As to quaternary structure, the RNAP catalytic core consists of 2 alpha, 1 beta, 1 beta' and 1 omega subunit. When a sigma factor is associated with the core the holoenzyme is formed, which can initiate transcription. Requires Mg(2+) as cofactor. Zn(2+) is required as a cofactor.

The catalysed reaction is RNA(n) + a ribonucleoside 5'-triphosphate = RNA(n+1) + diphosphate. DNA-dependent RNA polymerase catalyzes the transcription of DNA into RNA using the four ribonucleoside triphosphates as substrates. The polypeptide is DNA-directed RNA polymerase subunit beta' (Cupriavidus taiwanensis (strain DSM 17343 / BCRC 17206 / CCUG 44338 / CIP 107171 / LMG 19424 / R1) (Ralstonia taiwanensis (strain LMG 19424))).